A 193-amino-acid polypeptide reads, in one-letter code: T-cell receptor-associated transmembrane adapter 1 (193 aa).

Topologically, residues 1–10 (MSGNAECHFS) are extracellular. Residues 11–31 (IWAILAFLGLALTISLIFNIF) form a helical; Signal-anchor for type III membrane protein membrane-spanning segment. The Cytoplasmic segment spans residues 32–193 (HCVEKQRQEK…LHSLDYDLAQ (162 aa)). Phosphoserine is present on serine 46. Tyrosine 80 bears the Phosphotyrosine mark. Residues 80-83 (YEQM) are interaction with PIK3R1. The disordered stretch occupies residues 116–166 (NEGKRRKPRKQKSHLSDKDEEGQMHAKDISLSKTTLVDSYPPESEAIEENI). A compositionally biased stretch (basic residues) spans 119 to 128 (KRRKPRKQKS). A compositionally biased stretch (basic and acidic residues) spans 129-145 (HLSDKDEEGQMHAKDIS).

As to quaternary structure, homodimer; disulfide-linked. Interacts with CD3Z. When phosphorylated, interacts with PIK3R1. In terms of processing, phosphorylated on tyrosines upon TCR activation.

Its subcellular location is the cell membrane. Functionally, stabilizes the TCR (T-cell antigen receptor)/CD3 complex at the surface of T-cells. In Bos taurus (Bovine), this protein is T-cell receptor-associated transmembrane adapter 1 (TRAT1).